Here is a 104-residue protein sequence, read N- to C-terminus: Interferon alpha-inducible protein 27-like protein 1 (104 aa).

A run of 3 helical transmembrane segments spans residues Val-14–Met-34, Gly-59–Leu-79, and Val-81–Pro-101.

This sequence belongs to the IFI6/IFI27 family.

The protein localises to the membrane. Its function is as follows. Plays a role in the apoptotic process and has a pro-apoptotic activity. The polypeptide is Interferon alpha-inducible protein 27-like protein 1 (Homo sapiens (Human)).